Here is a 2059-residue protein sequence, read N- to C-terminus: Desmoplakin-A (2059 aa).

Residues 1-11 (MSLSGSQTRLH) show a composition bias toward polar residues. Residues 1-25 (MSLSGSQTRLHQISRRSSSRPDLTA) are disordered. Coiled coils occupy residues 320–354 (IPQK…LLKN) and 397–453 (FKEA…VQTL). Positions 665–690 (EVSSGKTATGVSSGKTATGVSSGKTS) are disordered. Over residues 671–690 (TATGVSSGKTATGVSSGKTS) the composition is skewed to low complexity. 2 coiled-coil regions span residues 1062 to 1229 (MEEL…AELE) and 1261 to 1383 (LQQD…LQQR). Plectin repeat units lie at residues 1450–1488 (YLGG…TLEL), 1489–1526 (LEAQ…KDKL), 1564–1602 (LLEA…NEIL), 1666–1694 (IVDP…FLEL), 1847–1885 (LLEA…SVKL), and 1923–1961 (FLEF…AQKL). Residues 2008-2059 (KGISSPYNVSSGPSSRSGSRAGSRTGSRSGSRRGSVDYSSSSVSYTFFSSAS) are disordered. Residues 2011–2059 (SSPYNVSSGPSSRSGSRAGSRTGSRSGSRRGSVDYSSSSVSYTFFSSAS) are compositionally biased toward low complexity.

The protein belongs to the plakin or cytolinker family.

Its subcellular location is the cell junction. It is found in the desmosome. The protein resides in the cell membrane. In terms of biological role, involved in the organization of desmosome cell-cell junctions. Of particular importance in cell adhesion in the skin and during cardiac development. May also play a role in the regulation of Wnt, TGF-beta and Hippo signaling pathways. This Danio rerio (Zebrafish) protein is Desmoplakin-A.